We begin with the raw amino-acid sequence, 140 residues long: Ribosome-binding factor A (140 aa).

Positions 121 to 140 (KAAEHGREDEELDDTEQDDK) are disordered. Over residues 129–140 (DEELDDTEQDDK) the composition is skewed to acidic residues.

It belongs to the RbfA family. Monomer. Binds 30S ribosomal subunits, but not 50S ribosomal subunits or 70S ribosomes.

It localises to the cytoplasm. One of several proteins that assist in the late maturation steps of the functional core of the 30S ribosomal subunit. Associates with free 30S ribosomal subunits (but not with 30S subunits that are part of 70S ribosomes or polysomes). Required for efficient processing of 16S rRNA. May interact with the 5'-terminal helix region of 16S rRNA. The sequence is that of Ribosome-binding factor A from Shewanella loihica (strain ATCC BAA-1088 / PV-4).